The following is a 463-amino-acid chain: 3-isopropylmalate dehydratase large subunit (463 aa).

3 residues coordinate [4Fe-4S] cluster: cysteine 347, cysteine 407, and cysteine 410.

It belongs to the aconitase/IPM isomerase family. LeuC type 1 subfamily. Heterodimer of LeuC and LeuD. It depends on [4Fe-4S] cluster as a cofactor.

It catalyses the reaction (2R,3S)-3-isopropylmalate = (2S)-2-isopropylmalate. It functions in the pathway amino-acid biosynthesis; L-leucine biosynthesis; L-leucine from 3-methyl-2-oxobutanoate: step 2/4. Its function is as follows. Catalyzes the isomerization between 2-isopropylmalate and 3-isopropylmalate, via the formation of 2-isopropylmaleate. In Buchnera aphidicola subsp. Cinara cedri (strain Cc), this protein is 3-isopropylmalate dehydratase large subunit.